Reading from the N-terminus, the 331-residue chain is Adenosine deaminase (331 aa).

Residues H12 and H14 each coordinate Zn(2+). H14, D16, and G170 together coordinate substrate. H197 contacts Zn(2+). Residue E200 is the Proton donor of the active site. Residue D278 participates in Zn(2+) binding.

Belongs to the metallo-dependent hydrolases superfamily. Adenosine and AMP deaminases family. Adenosine deaminase subfamily. Requires Zn(2+) as cofactor.

It carries out the reaction adenosine + H2O + H(+) = inosine + NH4(+). It catalyses the reaction 2'-deoxyadenosine + H2O + H(+) = 2'-deoxyinosine + NH4(+). In terms of biological role, catalyzes the hydrolytic deamination of adenosine and 2-deoxyadenosine. The chain is Adenosine deaminase from Clostridium botulinum (strain 657 / Type Ba4).